Here is a 165-residue protein sequence, read N- to C-terminus: uncharacterized protein (165 aa).

The region spanning 28–139 is the Cupin type-1 domain; it reads QNALKDTGLA…KPNEREEAVK (112 aa).

This is an uncharacterized protein from Bacillus subtilis (strain 168).